The sequence spans 84 residues: Small ribosomal subunit protein uS17 (84 aa).

Belongs to the universal ribosomal protein uS17 family. Part of the 30S ribosomal subunit.

Functionally, one of the primary rRNA binding proteins, it binds specifically to the 5'-end of 16S ribosomal RNA. This chain is Small ribosomal subunit protein uS17, found in Photobacterium profundum (strain SS9).